The chain runs to 199 residues: A-type ATP synthase subunit E (199 aa).

This sequence belongs to the V-ATPase E subunit family. In terms of assembly, has multiple subunits with at least A(3), B(3), C, D, E, F, H, I and proteolipid K(x).

Its subcellular location is the cell membrane. Its function is as follows. Component of the A-type ATP synthase that produces ATP from ADP in the presence of a proton gradient across the membrane. The protein is A-type ATP synthase subunit E of Pyrococcus abyssi (strain GE5 / Orsay).